The sequence spans 502 residues: MLSDCLLNNFRITAQIGSGAYGLVFHVVDILTSREYAVKTVFKSSSMDEFYNKNGLNNNSQVARTTLLQTQLYHFFKSFQKKLFLPSVDLDSILQLTENELNRLPHYREIAFQLRVQSHGNIVKIHQVLESSIATFIVMDYYDRDLFTSIVDDKHFVNHGILIKKVFLQLCSALDHCHRLGIYHCDIKPENVLLDRNDNAYLCDFGLSTKSKYLAPNVCVGSSYYMAPERILYCLNTTTNGIHVDECCSSLPTDTGDIWSLGIILINLTCIRNPWLKAHQKEDNTFQHFANDNNVLKKILPISDELFTVLTKILQLNPYTRIDMKTLMSEVSSLTSFTREGPLSQVPILSSEVYMTHIIRNENLFLSDLSHFSADQEQQQQQQQQQQQVQEQEQEQKQEQIQNQEQAQQQQEEEDAEPESDIPSTYNSDGSMEKYEYTNNHNNSTFLTSSMDSTPYQSDIDDVSASKDCKFQQDTLRNRLLCLQMNFSTLTDGPNEKWLPDY.

A Protein kinase domain is found at 10–338 (FRITAQIGSG…SEVSSLTSFT (329 aa)). Residues 16–24 (IGSGAYGLV) and lysine 39 contribute to the ATP site. Aspartate 186 functions as the Proton acceptor in the catalytic mechanism. 2 stretches are compositionally biased toward low complexity: residues 376 to 391 (QEQQ…QVQE) and 399 to 410 (EQIQNQEQAQQQ). Residues 376–439 (QEQQQQQQQQ…GSMEKYEYTN (64 aa)) form a disordered region. A compositionally biased stretch (acidic residues) spans 411–420 (QEEEDAEPES).

Belongs to the protein kinase superfamily. Ser/Thr protein kinase family.

The catalysed reaction is L-seryl-[protein] + ATP = O-phospho-L-seryl-[protein] + ADP + H(+). It catalyses the reaction L-threonyl-[protein] + ATP = O-phospho-L-threonyl-[protein] + ADP + H(+). In terms of biological role, may have a role in glucose regulation. The polypeptide is Serine/threonine-protein kinase SKS1 (SKS1) (Saccharomyces cerevisiae (strain ATCC 204508 / S288c) (Baker's yeast)).